The chain runs to 326 residues: MGFCFCLSSGGSTDKSQIYEITDYGQENAVLYSDHHVVPQNLGSVSSLAGGKGLNQDAAILHLGYGTEEGALCGVFDGHGPRGAFVSKNVRNQLPSILLGHMNNHSVTRDWKLICETSCLEMDKRILKVKKIHDCSASGTTAVLAVKHGNQVMVANLGDSRAVMIGTSEDGETKVAQLTNDLKPSVPSEAERIRKRNGRVLALESEPHILRVWLPTENRPGLAMSRAFGDFLLKSYGVIATPQVSTHQITSSDQFLLLASDGVWDVLSNEEVATVVMKSASEAGAANEVAEAATNAWIQKFPTVKIDDISVVCLSLNKKHNPQPQI.

The PPM-type phosphatase domain occupies 42–316 (LGSVSSLAGG…DDISVVCLSL (275 aa)). Mn(2+) is bound by residues aspartate 77, glycine 78, aspartate 261, and aspartate 307.

Belongs to the PP2C family. Mg(2+) serves as cofactor. Mn(2+) is required as a cofactor.

It carries out the reaction O-phospho-L-seryl-[protein] + H2O = L-seryl-[protein] + phosphate. The catalysed reaction is O-phospho-L-threonyl-[protein] + H2O = L-threonyl-[protein] + phosphate. The sequence is that of Probable protein phosphatase 2C 61 from Arabidopsis thaliana (Mouse-ear cress).